The chain runs to 76 residues: Kappa-actitoxin-Avd4d (76 aa).

A signal peptide spans 1-19; sequence MNKALFLCLVVLCAAVVFA. Residues 20–31 constitute a propeptide that is removed on maturation; sequence AEDLQKAKHVPF. 3 disulfide bridges follow: C37–C72, C39–C65, and C55–C73.

This sequence belongs to the sea anemone type 3 (BDS) potassium channel toxin family. Moderately expressed in the ectodermal tissue from the distal and proximal tentacles, body wall, and oral disk.

Its subcellular location is the secreted. The protein resides in the nematocyst. Functionally, blocks Kv3 voltage-gated potassium channels. Reduces blood pressure. The polypeptide is Kappa-actitoxin-Avd4d (Anemonia viridis (Snakelocks anemone)).